The following is a 208-amino-acid chain: EF-hand protein 5 variant 2 (208 aa).

A disordered region spans residues M1–A35. 4 EF-hand domains span residues M64 to E98, E99 to D134, T135 to R170, and S171 to N206. Residues E118, D123, D148, T152, and Y154 each coordinate Ca(2+).

The polypeptide is EF-hand protein 5 variant 2 (Trypanosoma cruzi).